A 110-amino-acid chain; its full sequence is Cysteine-rich and transmembrane domain-containing protein 1 (110 aa).

Residues 1–18 (MNYENPPPYASPPAPYPP) show a composition bias toward pro residues. The tract at residues 1–45 (MNYENPPPYASPPAPYPPYGQQQPSYPVPNQYPGNPPGPVGYQPA) is disordered. Low complexity predominate over residues 19 to 29 (YGQQQPSYPVP). A helical membrane pass occupies residues 87–104 (SGESACLTACWTALCCCC).

The protein belongs to the CYSTM1 family.

The protein resides in the membrane. The polypeptide is Cysteine-rich and transmembrane domain-containing protein 1 (cystm1) (Xenopus tropicalis (Western clawed frog)).